The chain runs to 530 residues: MKSIIFNEIKKILECDFALENPKDKNLAHFATPLAFSLAKELKKSPMFIASDLASKFQNHDCFESVEAVNGYLNFRISKTFLNELANQALTNPNDFTKGEKKQESFLLEYVSANPTGPLHIGHARGAVFGNTLTRLARHLGYKFDTEYYVNDAGNQIYLLGLSILLSVKENILHENVEYPEQYYKGEYIADLAKEAFEKFGKEFFSEENIPSLADWAKDKMLVLIKQNLEQAKIKIDSYVSERSYYDALNATLESLKEHKGIYEQEGKIWLASSQKGDEKDRVIIREDGRGTYLAADIVYHKDKMSRGYGKCINIWGADHHGYIPRMKAAMEFLGFDSNNLEIILAQMVSLLKDGEPYKMSKRAGNFILMSAVVDEIGSDALRYIFLSKKCDTHLEFDISDLQKEDSSNPVYYINYAHARIYQVFAKAGKKIDDVMGADLQSLNQDGINLLFEALNLKAILNDAFEARALQKIPDYLKNLAANFHKFYNENKVVGSANENDLLKLFSLVALSIKTAFSLMGIEAKNKMEH.

The short motif at 113–123 (ANPTGPLHIGH) is the 'HIGH' region element.

This sequence belongs to the class-I aminoacyl-tRNA synthetase family. Monomer.

The protein localises to the cytoplasm. The enzyme catalyses tRNA(Arg) + L-arginine + ATP = L-arginyl-tRNA(Arg) + AMP + diphosphate. This Campylobacter jejuni subsp. doylei (strain ATCC BAA-1458 / RM4099 / 269.97) protein is Arginine--tRNA ligase.